The sequence spans 27 residues: Metalloproteinase inhibitor 1 (27 aa).

A compositionally biased stretch (acidic residues) spans 1-12; the sequence is IEPERQEEEEEE. A disordered region spans residues 1–27; that stretch reads IEPERQEEEEEETRQRVRRGQVRQQQQ.

Metalloproteinase inhibitor, active on a globulinase from L.albus seeds, thermolysin and gelatinase B. This is Metalloproteinase inhibitor 1 from Lupinus albus (White lupine).